A 250-amino-acid chain; its full sequence is 3-deoxy-manno-octulosonate cytidylyltransferase (250 aa).

This sequence belongs to the KdsB family.

It is found in the cytoplasm. It catalyses the reaction 3-deoxy-alpha-D-manno-oct-2-ulosonate + CTP = CMP-3-deoxy-beta-D-manno-octulosonate + diphosphate. Its pathway is nucleotide-sugar biosynthesis; CMP-3-deoxy-D-manno-octulosonate biosynthesis; CMP-3-deoxy-D-manno-octulosonate from 3-deoxy-D-manno-octulosonate and CTP: step 1/1. It participates in bacterial outer membrane biogenesis; lipopolysaccharide biosynthesis. Functionally, activates KDO (a required 8-carbon sugar) for incorporation into bacterial lipopolysaccharide in Gram-negative bacteria. This is 3-deoxy-manno-octulosonate cytidylyltransferase from Xanthomonas campestris pv. campestris (strain 8004).